The following is an 84-amino-acid chain: UPF0457 protein BC_3525 (84 aa).

The protein belongs to the UPF0457 family.

The chain is UPF0457 protein BC_3525 from Bacillus cereus (strain ATCC 14579 / DSM 31 / CCUG 7414 / JCM 2152 / NBRC 15305 / NCIMB 9373 / NCTC 2599 / NRRL B-3711).